The sequence spans 96 residues: UPF0125 protein YfjF (96 aa).

The protein belongs to the UPF0125 (RnfH) family.

The sequence is that of UPF0125 protein YfjF (yfjF) from Escherichia coli O157:H7.